A 108-amino-acid chain; its full sequence is uncharacterized protein (108 aa).

The chain crosses the membrane as a helical span at residues 64–84 (LFIIYYYYYLLICLSPHFFPI).

It localises to the membrane. This is an uncharacterized protein from Schizosaccharomyces pombe (strain 972 / ATCC 24843) (Fission yeast).